Consider the following 566-residue polypeptide: O-fucosyltransferase 36 (566 aa).

Residues 1-14 (MERNSSDDEEDHQH) are compositionally biased toward basic and acidic residues. The interval 1–37 (MERNSSDDEEDHQHLIPQNDTRIRHREDSVSSNATTI) is disordered. Residues 66-86 (YVIVFVSLIISIGLLFLLTDP) traverse the membrane as a helical; Signal-anchor for type II membrane protein segment. Asn-93, Asn-129, Asn-138, Asn-179, and Asn-190 each carry an N-linked (GlcNAc...) asparagine glycan. Residues 415 to 417 (HFR) and 531 to 532 (TF) each bind substrate.

This sequence belongs to the glycosyltransferase GT106 family.

The protein localises to the membrane. Its pathway is glycan metabolism. The sequence is that of O-fucosyltransferase 36 from Arabidopsis thaliana (Mouse-ear cress).